Here is a 71-residue protein sequence, read N- to C-terminus: General transcription and DNA repair factor IIH subunit TFB5 (71 aa).

Belongs to the TFB5 family. As to quaternary structure, component of the 7-subunit TFIIH core complex composed of XPB, XPD, TFB1/GTF2H1, GTF2H2/P44, TFB4/GTF2H3, TFB2/GTF2H4 and TFB5/GTF2H5, which is active in NER. The core complex associates with the 3-subunit CDK-activating kinase (CAK) module composed of CYCH1/cyclin H1, CDKD and MAT1/At4g30820 to form the 10-subunit holoenzyme (holo-TFIIH) active in transcription.

It localises to the nucleus. Its function is as follows. Component of the general transcription and DNA repair factor IIH (TFIIH) core complex, which is involved in general and transcription-coupled nucleotide excision repair (NER) of damaged DNA and, when complexed to CAK, in RNA transcription by RNA polymerase II. In NER, TFIIH acts by opening DNA around the lesion to allow the excision of the damaged oligonucleotide and its replacement by a new DNA fragment. In transcription, TFIIH has an essential role in transcription initiation. When the pre-initiation complex (PIC) has been established, TFIIH is required for promoter opening and promoter escape. Phosphorylation of the C-terminal tail (CTD) of the largest subunit of RNA polymerase II by the kinase module CAK controls the initiation of transcription. This chain is General transcription and DNA repair factor IIH subunit TFB5, found in Arabidopsis thaliana (Mouse-ear cress).